A 232-amino-acid chain; its full sequence is Phosphatidylserine decarboxylase proenzyme (232 aa).

The active-site Schiff-base intermediate with substrate; via pyruvic acid is the S190. S190 is modified (pyruvic acid (Ser); by autocatalysis).

Belongs to the phosphatidylserine decarboxylase family. PSD-A subfamily. Heterodimer of a large membrane-associated beta subunit and a small pyruvoyl-containing alpha subunit. Pyruvate serves as cofactor. Is synthesized initially as an inactive proenzyme. Formation of the active enzyme involves a self-maturation process in which the active site pyruvoyl group is generated from an internal serine residue via an autocatalytic post-translational modification. Two non-identical subunits are generated from the proenzyme in this reaction, and the pyruvate is formed at the N-terminus of the alpha chain, which is derived from the carboxyl end of the proenzyme. The post-translation cleavage follows an unusual pathway, termed non-hydrolytic serinolysis, in which the side chain hydroxyl group of the serine supplies its oxygen atom to form the C-terminus of the beta chain, while the remainder of the serine residue undergoes an oxidative deamination to produce ammonia and the pyruvoyl prosthetic group on the alpha chain.

The protein localises to the cell membrane. It catalyses the reaction a 1,2-diacyl-sn-glycero-3-phospho-L-serine + H(+) = a 1,2-diacyl-sn-glycero-3-phosphoethanolamine + CO2. It participates in phospholipid metabolism; phosphatidylethanolamine biosynthesis; phosphatidylethanolamine from CDP-diacylglycerol: step 2/2. Functionally, catalyzes the formation of phosphatidylethanolamine (PtdEtn) from phosphatidylserine (PtdSer). The protein is Phosphatidylserine decarboxylase proenzyme of Rhizobium rhizogenes (strain K84 / ATCC BAA-868) (Agrobacterium radiobacter).